The sequence spans 493 residues: Alpha-amylase-related protein (493 aa).

A signal peptide spans 1–19; the sequence is MFKFATAVILCLAASSTLA. Gln-20 carries the pyrrolidone carboxylic acid modification. Cys-47 and Cys-103 are joined by a disulfide. Residues Asn-117, Gln-168, and Asp-177 each contribute to the Ca(2+) site. A disulfide bridge connects residues Cys-156 and Cys-170. Residue Arg-205 coordinates chloride. The active-site Nucleophile is the Asp-207. Ca(2+) is bound at residue His-211. Catalysis depends on Glu-244, which acts as the Proton donor. Chloride-binding residues include Asn-307 and Arg-342. 3 cysteine pairs are disulfide-bonded: Cys-375–Cys-381, Cys-417–Cys-440, and Cys-447–Cys-459.

It belongs to the glycosyl hydrolase 13 family. Monomer. It depends on Ca(2+) as a cofactor. Chloride serves as cofactor.

It is found in the secreted. The enzyme catalyses Endohydrolysis of (1-&gt;4)-alpha-D-glucosidic linkages in polysaccharides containing three or more (1-&gt;4)-alpha-linked D-glucose units.. The chain is Alpha-amylase-related protein (Amyrel) from Drosophila ananassae (Fruit fly).